Here is a 275-residue protein sequence, read N- to C-terminus: NH(3)-dependent NAD(+) synthetase (275 aa).

46 to 53 (GISGGQDS) serves as a coordination point for ATP. Asp52 lines the Mg(2+) pocket. A deamido-NAD(+)-binding site is contributed by Arg140. Thr160 lines the ATP pocket. Glu165 provides a ligand contact to Mg(2+). Residues Lys173 and Asp180 each coordinate deamido-NAD(+). ATP is bound by residues Lys189 and Thr211. Residue 260-261 (HK) coordinates deamido-NAD(+).

It belongs to the NAD synthetase family. As to quaternary structure, homodimer.

The catalysed reaction is deamido-NAD(+) + NH4(+) + ATP = AMP + diphosphate + NAD(+) + H(+). The protein operates within cofactor biosynthesis; NAD(+) biosynthesis; NAD(+) from deamido-NAD(+) (ammonia route): step 1/1. Catalyzes the ATP-dependent amidation of deamido-NAD to form NAD. Uses ammonia as a nitrogen source. The polypeptide is NH(3)-dependent NAD(+) synthetase (Escherichia coli O139:H28 (strain E24377A / ETEC)).